A 291-amino-acid polypeptide reads, in one-letter code: Small ribosomal subunit protein uS2 (291 aa).

Belongs to the universal ribosomal protein uS2 family.

The protein is Small ribosomal subunit protein uS2 of Orientia tsutsugamushi (strain Boryong) (Rickettsia tsutsugamushi).